We begin with the raw amino-acid sequence, 402 residues long: MAVRKEKVQPFRECGIAIAVLVGIFIGCVCTILIPNDFVNFRSSKVASASCESPERVKMFKAEFAIISEKNGELRKQVSDLTEKVRLAEQKEVIKAGPFGTVTGLQTNPTVAPDESANPRLAKLLEKVAVNKEIIVVLANNNVKPMLEVQIASVKRVGIQNYLVVPLDDSLESFCKSNEVAYYKRDPDNAIDVVGKSRRSSDVSGLKFRVLREFLQLGYGVLLSDVDIVFLQNPFGHLYRDSDVESMSDGHDNNTAYGFNDVFDDPTMTRSRTVYTNRIWVFNSGFFYLRPTLPSIELLDRVTDTLSKSGGWDQAVFNQHLFYPSHPGYTGLYASKRVMDVYEFMNSRVLFKTVRKDEEMKKLKPVIIHMNYHSDKLERMQAAVEFYVNGKQDALDRFRDGS.

At 1 to 13 (MAVRKEKVQPFRE) the chain is on the cytoplasmic side. Residues 14–34 (CGIAIAVLVGIFIGCVCTILI) form a helical; Signal-anchor for type II membrane protein membrane-spanning segment. Residues 35–402 (PNDFVNFRSS…DALDRFRDGS (368 aa)) lie on the Lumenal side of the membrane. The DXD motif signature appears at 225–227 (DVD). The N-linked (GlcNAc...) asparagine glycan is linked to asparagine 253.

This sequence belongs to the glycosyltransferase 77 family. As to expression, expressed in leaf meristem and at points of cauline leaf attachments on the primary stem. Expressed at low levels in siliques.

The protein localises to the golgi apparatus membrane. Functionally, plays a role in the arabinosylation of cell wall components. Involved in the arabinosylation of extensin proteins in root hair cells. Extensins are structural glycoproteins present in cell walls and its arabinosylation is important for root hair cell development. This is Arabinosyltransferase RRA1 from Arabidopsis thaliana (Mouse-ear cress).